Here is a 209-residue protein sequence, read N- to C-terminus: MGRGKIEIKRIENSSNRQVTYSKRRNGILKKAKEISVLCDARVSVIIFASSGKMHEFSSTSLVDILDQYHKLTGRRLWDAKHENLDNEINKVKKDNDNMQIELRHLKGEDITSLNHRELMMLEDALDNGLTSIRNKQNDLLRMMRKKTQSMEEEQDQLNWQLRQLEIASMNRNMGEIGEVFHQRENEYQTQMPFAFRVQPMQPNLQERF.

In terms of domain architecture, MADS-box spans 3–57 (RGKIEIKRIENSSNRQVTYSKRRNGILKKAKEISVLCDARVSVIIFASSGKMHEF). The K-box domain occupies 82 to 173 (HENLDNEINK…QLEIASMNRN (92 aa)).

As to expression, expressed mainly in floral organs and, within the flower, expression is restricted to petals and stamens.

Its subcellular location is the nucleus. Functionally, transcription factor involved in the genetic control of flower development. Acts in conjunction with DEFICIENS (defA). The protein is Floral homeotic protein GLOBOSA (GLO) of Nicotiana tabacum (Common tobacco).